The sequence spans 313 residues: Olfactory receptor 51A4 (313 aa).

The Extracellular segment spans residues 1–27; the sequence is MSIINTSYVEITTFFLVGMPGLEYAHI. Asn-5 is a glycosylation site (N-linked (GlcNAc...) asparagine). Residues 28–48 form a helical membrane-spanning segment; the sequence is WISIPICSMYLIAILGNGTIL. Topologically, residues 49–56 are cytoplasmic; it reads FIIKTEPS. Residues 57–77 form a helical membrane-spanning segment; sequence LHEPMYYFLSMLAMSDLGLSL. The Extracellular portion of the chain corresponds to 78–101; sequence SSLPTVLSIFLFNAPEISSNACFA. Cys-99 and Cys-191 are oxidised to a cystine. The helical transmembrane segment at 102-122 threads the bilayer; the sequence is QEFFIHGFSVLESSVLLIMSF. Topologically, residues 123-141 are cytoplasmic; the sequence is DRFLAIHNPLRYTSILTTV. The helical transmembrane segment at 142 to 162 threads the bilayer; that stretch reads RVAQIGIVFSFKSMLLVLPFP. The Extracellular segment spans residues 163 to 198; it reads FTLRNLRYCKKNQLSHSYCLHQDVMKLACSDNRIDV. A helical membrane pass occupies residues 199–218; the sequence is IYGFFGALCLMVDFILIAVS. At 219-238 the chain is on the cytoplasmic side; it reads YTLILKTVLGIASKKEQLKA. Residues 239–259 traverse the membrane as a helical segment; sequence LNTCVSHICAVIIFYLPIINL. At 260–274 the chain is on the extracellular side; the sequence is AVVHRFARHVSPLIN. A helical transmembrane segment spans residues 275–295; that stretch reads VLMANVLLLVPPLTNPIVYCV. Over 296-313 the chain is Cytoplasmic; that stretch reads KTKQIRVRVVAKLCQRKI.

This sequence belongs to the G-protein coupled receptor 1 family.

The protein resides in the cell membrane. Functionally, odorant receptor. This chain is Olfactory receptor 51A4 (OR51A4), found in Homo sapiens (Human).